The primary structure comprises 784 residues: E3 ubiquitin-protein ligase RNF43 (784 aa).

Residues 1-23 form the signal peptide; it reads MSGGHQLQLAVLWPWLLMATLHA. Over 24–197 the chain is Extracellular; the sequence is GFGHTGRVLA…LKEPPAGANY (174 aa). 2 N-linked (GlcNAc...) asparagine glycosylation sites follow: Asn-62 and Asn-92. A disulfide bridge connects residues Cys-91 and Cys-119. A helical membrane pass occupies residues 198–218; that stretch reads DVWILLTVVGTVFVIILASVL. Over 219–784 the chain is Cytoplasmic; the sequence is RIRCRPHHSR…ELEELCEQAV (566 aa). An RING-type; atypical zinc finger spans residues 272–313; it reads CAICLEEFSEGQELRVISCLHEFHRTCVDPWLYQHRTCPLCM. 3 disordered regions span residues 364–407, 459–478, and 516–671; these read TSVA…HLAV, ADGP…SSDS, and DLQG…SLPP. Basic residues predominate over residues 386 to 395; the sequence is RHQRLPRTSH. A compositionally biased stretch (low complexity) spans 464–478; that stretch reads SDSSSGPCHGSSSDS. The span at 548-568 shows a compositional bias: basic residues; it reads IHYHRHRHHHYKRQFQWHGRK. Positions 583 to 608 are enriched in polar residues; it reads SHTQLEPSLPDQQLITPNPTASSMLP. Residues 618–629 are compositionally biased toward low complexity; it reads EPAPGLAEASSP.

This sequence belongs to the ZNRF3 family. As to quaternary structure, interacts with AKAP8L, NONO and SFPQ. Interacts with FZD5. Identified in a complex composed of RNF43, LGR5 and RSPO1. Interacts with RSPO2. Interacts with LMBR1L. Post-translationally, autoubiquitinated. In terms of tissue distribution, expressed in crypt base columnar cells of small intestinal epithelium. Crypt base columnar cells are small cycling cells residing between the terminally differentiated Paneth cells at crypt bottoms. Colocalizes with Lgr5-positive stem cells.

The protein localises to the cell membrane. The protein resides in the endoplasmic reticulum membrane. It localises to the nucleus envelope. The enzyme catalyses S-ubiquitinyl-[E2 ubiquitin-conjugating enzyme]-L-cysteine + [acceptor protein]-L-lysine = [E2 ubiquitin-conjugating enzyme]-L-cysteine + N(6)-ubiquitinyl-[acceptor protein]-L-lysine.. It participates in protein modification; protein ubiquitination. In terms of biological role, E3 ubiquitin-protein ligase that acts as a negative regulator of the Wnt signaling pathway by mediating the ubiquitination, endocytosis and subsequent degradation of Wnt receptor complex components Frizzled. Acts on both canonical and non-canonical Wnt signaling pathway. Along with RSPO2 and ZNRF3, constitutes a master switch that governs limb specification. The chain is E3 ubiquitin-protein ligase RNF43 (Rnf43) from Mus musculus (Mouse).